The following is a 98-amino-acid chain: Feather keratin 4 (98 aa).

S2 is modified (N-acetylserine).

It belongs to the avian keratin family. As to quaternary structure, the avian keratins (F-ker, S-ker, C-ker and B-ker) are a complex mixture of very similar polypeptides.

The protein is Feather keratin 4 of Gallus gallus (Chicken).